Here is a 247-residue protein sequence, read N- to C-terminus: UDP-2,3-diacylglucosamine hydrolase (247 aa).

Mn(2+) contacts are provided by D8, H10, D41, N79, and H115. 79-80 (NH) provides a ligand contact to substrate. Substrate is bound by residues D123, K165, K168, and H196. The Mn(2+) site is built by H196 and H198.

The protein belongs to the LpxH family. The cofactor is Mn(2+).

Its subcellular location is the cell inner membrane. It catalyses the reaction UDP-2-N,3-O-bis[(3R)-3-hydroxytetradecanoyl]-alpha-D-glucosamine + H2O = 2-N,3-O-bis[(3R)-3-hydroxytetradecanoyl]-alpha-D-glucosaminyl 1-phosphate + UMP + 2 H(+). It participates in glycolipid biosynthesis; lipid IV(A) biosynthesis; lipid IV(A) from (3R)-3-hydroxytetradecanoyl-[acyl-carrier-protein] and UDP-N-acetyl-alpha-D-glucosamine: step 4/6. Hydrolyzes the pyrophosphate bond of UDP-2,3-diacylglucosamine to yield 2,3-diacylglucosamine 1-phosphate (lipid X) and UMP by catalyzing the attack of water at the alpha-P atom. Involved in the biosynthesis of lipid A, a phosphorylated glycolipid that anchors the lipopolysaccharide to the outer membrane of the cell. This Blochmanniella floridana protein is UDP-2,3-diacylglucosamine hydrolase.